Here is a 122-residue protein sequence, read N- to C-terminus: Large ribosomal subunit protein uL14 (122 aa).

This sequence belongs to the universal ribosomal protein uL14 family. As to quaternary structure, part of the 50S ribosomal subunit. Forms a cluster with proteins L3 and L19. In the 70S ribosome, L14 and L19 interact and together make contacts with the 16S rRNA in bridges B5 and B8.

In terms of biological role, binds to 23S rRNA. Forms part of two intersubunit bridges in the 70S ribosome. The polypeptide is Large ribosomal subunit protein uL14 (Saccharopolyspora erythraea (strain ATCC 11635 / DSM 40517 / JCM 4748 / NBRC 13426 / NCIMB 8594 / NRRL 2338)).